The following is a 316-amino-acid chain: Ribosomal RNA small subunit methyltransferase H (316 aa).

Residues 35–37 (SGH), D55, F84, D105, and Q112 contribute to the S-adenosyl-L-methionine site.

Belongs to the methyltransferase superfamily. RsmH family.

It localises to the cytoplasm. It catalyses the reaction cytidine(1402) in 16S rRNA + S-adenosyl-L-methionine = N(4)-methylcytidine(1402) in 16S rRNA + S-adenosyl-L-homocysteine + H(+). Functionally, specifically methylates the N4 position of cytidine in position 1402 (C1402) of 16S rRNA. The protein is Ribosomal RNA small subunit methyltransferase H of Streptococcus equi subsp. zooepidemicus (strain H70).